Here is a 151-residue protein sequence, read N- to C-terminus: Globin CTT-X (151 aa).

The Globin domain maps to T6–E150. Residues H64 and H99 each coordinate heme b.

This sequence belongs to the globin family. In terms of assembly, homodimer.

This chain is Globin CTT-X (CTT-10), found in Chironomus thummi thummi (Midge).